A 359-amino-acid polypeptide reads, in one-letter code: 3-dehydroquinate synthase (359 aa).

NAD(+) is bound by residues 71–76 (DGEAHK), 105–109 (GVIGD), 129–130 (TT), K142, K151, and 169–172 (TLHT). 3 residues coordinate Zn(2+): E184, H247, and H264.

It belongs to the sugar phosphate cyclases superfamily. Dehydroquinate synthase family. Co(2+) is required as a cofactor. The cofactor is Zn(2+). Requires NAD(+) as cofactor.

The protein localises to the cytoplasm. The catalysed reaction is 7-phospho-2-dehydro-3-deoxy-D-arabino-heptonate = 3-dehydroquinate + phosphate. Its pathway is metabolic intermediate biosynthesis; chorismate biosynthesis; chorismate from D-erythrose 4-phosphate and phosphoenolpyruvate: step 2/7. In terms of biological role, catalyzes the conversion of 3-deoxy-D-arabino-heptulosonate 7-phosphate (DAHP) to dehydroquinate (DHQ). The sequence is that of 3-dehydroquinate synthase from Neisseria gonorrhoeae (strain ATCC 700825 / FA 1090).